Consider the following 1093-residue polypeptide: MRKVSVLLFLAWVCFLFYAGIALFTSGFLLTRLELTNQSSCQELPGPGPLPWGSHGKPGACWMPSRFSRVVLVLIDALRFDFAQPQRSHVPGEPPVSVPFLGKLGSLQRILESQPHHGRLYRSQVDPPTTTMQRLKALTTGSLPTFIDAGSNFASHAIVEDNVIQQLNSAGRRVVFMGDDTWRDLFPGAFSQAFFFSSFNVRDLHTVDNGILEHLYPTLDGGSWDVLIAHFLGVDHCGHKHGPHHPEMAKKLSQMDQVIQGLIERLENDTLLVVAGDHGMTMNGDHGGDSELEVSAALFLYSPTALFPSVPPEEPEVIPQVSLVPTLALLLGLPIPFGNTGEVMAELFSGGSDSSHPHSSALAQVSALHINAQQVSRFLHTYSAATQDLQVKELHRLQTLFSKASARYQHFLRDPQEAEAALSTLTAEFQQFLRGARALCIESWARFSLVRMAGGAALLAAACLLCLLASQLAVAPGFLFRPLLLIPVAWGLTWTILYAGVSVTTGSKIDLVVLGAVAAAGSLLPFLWKAWVSRGSKRPLAPLLPVPRPVLILLLIRLATFFSDSFFVVEARATPFLLGSLVFFLVAQLHWEGQLLPPKPLTMSRLGSSAPTAPPRHSGAHALWLGIGLLLFTRLAGLFHRCPEETPACRSSPWLSPLASMVGGRAKNLWYGACVGALVALLVVVRLWLRRYGNLKSPEPPVLFVRWGMPLMVLGTAAYWALASGAEEAPPRLRALVAGASAVLPRAVMGLAALGLVLLLWRPVTVLVKAGAATSRTRTILTPFSGPPTSQADLDYVVPQIYRHMQEEFQGRLERTKAQGPITVAAYQLGSVYSAAMVTALLLLAFPLMLLHVERVSLVFLLLFLQSFLLLHLLAAGTPVATPGPFTVLWQAVSAWVLLATQTFYSTGHQPVFSAIHWHAAFVGFPDGHGSSTWLPALLVGANTFASHLLFAVGCPLLLLWPFLCERQGPKRRQPLPGSESEARVRPEEEEELQEPLMEVRLRDAPNHFNAALLQLGLKYLFILGAQILACALAASILRRHLMVWKVFAPKFIFEAVGFIVSSVGLLLGIALVMRVDVAVSSWFKKLVLAQQR.

Residues 4-24 (VSVLLFLAWVCFLFYAGIALF) form a helical membrane-spanning segment. An N-linked (GlcNAc...) asparagine glycan is attached at Asn-268. Transmembrane regions (helical) follow at residues 460–480 (AAAC…GFLF), 483–503 (LLLI…GVSV), 512–532 (VVLG…KAWV), 669–689 (LWYG…RLWL), 702–722 (VLFV…YWAL), 748–768 (VMGL…TVLV), 831–851 (SVYS…LMLL), 856–876 (VSLV…LLAA), and 945–965 (FASH…PFLC). The interval 971 to 991 (KRRQPLPGSESEARVRPEEEE) is disordered. Helical transmembrane passes span 1018–1038 (LKYL…ASIL) and 1052–1072 (FIFE…GIAL).

Belongs to the PIGG/PIGN/PIGO family. PIGO subfamily. As to quaternary structure, forms the ethanolamine phosphate transferase 3 complex composed by PIGO and PIGF. PIGF is required to stabilize PIGO.

The protein resides in the endoplasmic reticulum membrane. It participates in glycolipid biosynthesis; glycosylphosphatidylinositol-anchor biosynthesis. Catalytic subunit of the ethanolamine phosphate transferase 3 complex that transfers an ethanolamine phosphate (EtNP) from a phosphatidylethanolamine (PE) to the 6-OH position of the third alpha-1,2-linked mannose of the an alpha-D-Man-(1-&gt;2)-alpha-D-Man-(1-&gt;6)-2-PEtn-alpha-D-Man-(1-&gt;4)-alpha-D-GlcN-(1-&gt;6)-(1-radyl,2-acyl-sn-glycero-3-phospho)-2-acyl-inositol (also termed H6) intermediate to generate a 6-PEtn-alpha-D-Man-(1-&gt;2)-alpha-D-Man-(1-&gt;6)-2-PEtn-alpha-D-Man-(1-&gt;4)-alpha-D-GlcN-(1-&gt;6)-(1-radyl,2-acyl-sn-glycero-3-phospho)-2-acyl-inositol (also termed H7) and participates in the tenth step of the glycosylphosphatidylinositol-anchor biosynthesis. The protein is GPI ethanolamine phosphate transferase 3, catalytic subunit of Mus musculus (Mouse).